A 588-amino-acid polypeptide reads, in one-letter code: Proteasome-associated ATPase (588 aa).

The span at 1–10 shows a compositional bias: basic and acidic residues; that stretch reads MAAHDDDMNR. The tract at residues 1-23 is disordered; that stretch reads MAAHDDDMNRGIRPGRGSEDPAG. The stretch at 47–94 forms a coiled coil; the sequence is RILEERIVELQTNLAGVSAQNERLAGTLREARDQIVALKEEVDRLAQP. ATP is bound at residue 276-281; that stretch reads GCGKTL. The docks into pockets in the proteasome alpha-ring stretch occupies residues 587 to 588; the sequence is YL.

The protein belongs to the AAA ATPase family. Homohexamer. Assembles into a hexameric ring structure that caps the 20S proteasome core. Strongly interacts with the prokaryotic ubiquitin-like protein Pup through a hydrophobic interface; the interacting region of ARC lies in its N-terminal coiled-coil domain. There is one Pup binding site per ARC hexamer ring. Upon ATP-binding, the C-terminus of ARC interacts with the alpha-rings of the proteasome core, possibly by binding to the intersubunit pockets.

The protein operates within protein degradation; proteasomal Pup-dependent pathway. Functionally, ATPase which is responsible for recognizing, binding, unfolding and translocation of pupylated proteins into the bacterial 20S proteasome core particle. May be essential for opening the gate of the 20S proteasome via an interaction with its C-terminus, thereby allowing substrate entry and access to the site of proteolysis. Thus, the C-termini of the proteasomal ATPase may function like a 'key in a lock' to induce gate opening and therefore regulate proteolysis. The polypeptide is Proteasome-associated ATPase (Streptomyces coelicolor (strain ATCC BAA-471 / A3(2) / M145)).